A 372-amino-acid chain; its full sequence is UDP-N-acetylglucosamine--N-acetylmuramyl-(pentapeptide) pyrophosphoryl-undecaprenol N-acetylglucosamine transferase (372 aa).

Residues 21-23, asparagine 135, arginine 172, serine 206, and glutamine 303 contribute to the UDP-N-acetyl-alpha-D-glucosamine site; that span reads TAG.

This sequence belongs to the glycosyltransferase 28 family. MurG subfamily.

The protein resides in the cell membrane. The catalysed reaction is di-trans,octa-cis-undecaprenyl diphospho-N-acetyl-alpha-D-muramoyl-L-alanyl-D-glutamyl-meso-2,6-diaminopimeloyl-D-alanyl-D-alanine + UDP-N-acetyl-alpha-D-glucosamine = di-trans,octa-cis-undecaprenyl diphospho-[N-acetyl-alpha-D-glucosaminyl-(1-&gt;4)]-N-acetyl-alpha-D-muramoyl-L-alanyl-D-glutamyl-meso-2,6-diaminopimeloyl-D-alanyl-D-alanine + UDP + H(+). It participates in cell wall biogenesis; peptidoglycan biosynthesis. In terms of biological role, cell wall formation. Catalyzes the transfer of a GlcNAc subunit on undecaprenyl-pyrophosphoryl-MurNAc-pentapeptide (lipid intermediate I) to form undecaprenyl-pyrophosphoryl-MurNAc-(pentapeptide)GlcNAc (lipid intermediate II). This chain is UDP-N-acetylglucosamine--N-acetylmuramyl-(pentapeptide) pyrophosphoryl-undecaprenol N-acetylglucosamine transferase, found in Paenarthrobacter aurescens (strain TC1).